The primary structure comprises 149 residues: Deoxyuridine 5'-triphosphate nucleotidohydrolase (149 aa).

Substrate contacts are provided by residues 68–70 (RSG), Asn-81, and 85–87 (LID).

It belongs to the dUTPase family. It depends on Mg(2+) as a cofactor.

The catalysed reaction is dUTP + H2O = dUMP + diphosphate + H(+). It participates in pyrimidine metabolism; dUMP biosynthesis; dUMP from dCTP (dUTP route): step 2/2. Functionally, this enzyme is involved in nucleotide metabolism: it produces dUMP, the immediate precursor of thymidine nucleotides and it decreases the intracellular concentration of dUTP so that uracil cannot be incorporated into DNA. This chain is Deoxyuridine 5'-triphosphate nucleotidohydrolase, found in Azoarcus sp. (strain BH72).